The primary structure comprises 4588 residues: Protocadherin Fat 1 (4588 aa).

The first 21 residues, 1 to 21, serve as a signal peptide directing secretion; that stretch reads MGRHLALLLLLLLLFQHFGDS. The Extracellular portion of the chain corresponds to 22 to 4181; that stretch reads DGSQRLEQTP…STPWNIGLAE (4160 aa). Cadherin domains lie at 35–149 and 150–257; these read THLE…RPLF and SPTS…APVI. A glycan (N-linked (GlcNAc...) asparagine) is linked at asparagine 40. The N-linked (GlcNAc...) asparagine glycan is linked to asparagine 333. Cadherin domains are found at residues 368 to 463, 464 to 569, 570 to 673, 718 to 822, 823 to 927, 928 to 1034, 1035 to 1139, 1140 to 1245, 1246 to 1357, 1359 to 1456, 1457 to 1562, 1563 to 1667, 1668 to 1765, 1766 to 1879, 1880 to 1979, 1980 to 2081, 2082 to 2182, 2183 to 2283, 2284 to 2390, 2391 to 2492, 2493 to 2596, 2597 to 2703, 2704 to 2809, 2810 to 2918, 2919 to 3023, 3024 to 3125, 3126 to 3230, 3231 to 3335, 3336 to 3440, 3441 to 3545, and 3546 to 3647; these read EKDV…PPEF, TQTA…TPLF, EKIN…VNLQ, STLP…PPEF, LQES…PPTF, IPPN…PPVF, SSFV…APQT, SEPV…KPQF, LQKF…EPIS, EESF…RPQF, STSK…APWF, TASS…SPKF, TSKE…APVF, MQAE…PPVF, AKPL…HLKF, TQDV…APVF, VNLP…MPVF, EKPF…PPVF, AQQS…PPLF, EQQI…SPAF, LQNE…APQF, RATK…LPKF, SEPF…SPVF, ESSP…PPRF, TAEI…SPVC, EKTL…APEF, SADP…PPVF, EYRE…TPVF, SQDT…APVF, SRGN…PPAI, and LPLE…AIRF. N-linked (GlcNAc...) asparagine glycans are attached at residues asparagine 660, asparagine 740, and asparagine 791. Residue asparagine 998 is glycosylated (N-linked (GlcNAc...) asparagine). Asparagine 1426 and asparagine 1551 each carry an N-linked (GlcNAc...) asparagine glycan. N-linked (GlcNAc...) asparagine glycosylation is found at asparagine 1748, asparagine 1864, asparagine 1902, asparagine 1940, and asparagine 1991. N-linked (GlcNAc...) asparagine glycosylation is found at asparagine 2325 and asparagine 2464. N-linked (GlcNAc...) asparagine glycans are attached at residues asparagine 3324, asparagine 3422, asparagine 3444, asparagine 3613, asparagine 3640, and asparagine 3716. Positions 3790 to 3827 constitute an EGF-like 1 domain; sequence VHHGCEDDPCPEGSECVSDPWEEKHTCVCPSGRFGQCP. 15 disulfides stabilise this stretch: cysteine 3794-cysteine 3805, cysteine 3799-cysteine 3816, cysteine 3818-cysteine 3826, cysteine 3976-cysteine 4009, cysteine 4017-cysteine 4028, cysteine 4022-cysteine 4038, cysteine 4040-cysteine 4049, cysteine 4056-cysteine 4067, cysteine 4061-cysteine 4076, cysteine 4078-cysteine 4087, cysteine 4093-cysteine 4104, cysteine 4098-cysteine 4113, cysteine 4115-cysteine 4124, cysteine 4131-cysteine 4142, and cysteine 4136-cysteine 4151. The 181-residue stretch at 3829 to 4009 folds into the Laminin G-like domain; sequence SSSMTLTGNS…EESVDVSPGC (181 aa). EGF-like domains lie at 4013–4050, 4052–4088, and 4089–4125; these read ATED…THCE, SVNP…QRCQ, and LSPY…ERCQ. In terms of domain architecture, EGF-like 5; calcium-binding spans 4127-4163; that stretch reads DIDECSGNPCLHGALCENTHGSYHCNCSHEYRGRHCE. The N-linked (GlcNAc...) asparagine glycan is linked to asparagine 4152. Residues cysteine 4153 and cysteine 4162 are joined by a disulfide bond. Residues 4182–4202 traverse the membrane as a helical segment; that stretch reads GIGIVVFVAGIFLLVVVFVLC. Residues 4203 to 4588 are Cytoplasmic-facing; sequence RKMISRKKKH…PLDSQQHTEV (386 aa). The Nuclear localization signal motif lies at 4204 to 4214; sequence KMISRKKKHQA. Disordered stretches follow at residues 4255 to 4275, 4303 to 4327, and 4343 to 4376; these read SYTP…SFEG, SVAP…QKPS, and LSKK…SESC. The segment covering 4256-4265 has biased composition (polar residues); that stretch reads YTPSIPSDSR. Polar residues predominate over residues 4363 to 4374; it reads SEVQSLSSFQSE. Residues 4378–4382 carry the PTB-like motif motif; the sequence is DNGYH. 2 disordered regions span residues 4435-4479 and 4565-4588; these read FPPP…SSSR and ESGD…HTEV.

As to quaternary structure, interacts (via the C-terminus 4300-4400 AA) with ATN1. Interacts with RERE. Post-translationally, undergoes proteolytic cleavage. The extracellular domain is cleaved off and the cytoplasmic domain (about 400 AA) shuttles to the nucleus. As to expression, expressed in many epithelial and some endothelial and smooth muscle cells.

The protein localises to the cell membrane. It localises to the nucleus. Functionally, plays an essential role for cellular polarization, directed cell migration and modulating cell-cell contact. This is Protocadherin Fat 1 (FAT1) from Homo sapiens (Human).